A 558-amino-acid polypeptide reads, in one-letter code: 2-isopropylmalate synthase (558 aa).

Residues 30–303 enclose the Pyruvate carboxyltransferase domain; the sequence is PIWCSVDLRD…DPKLDCSDIE (274 aa). Mg(2+) contacts are provided by aspartate 39, histidine 242, histidine 244, and asparagine 278. The interval 437–558 is regulatory domain; it reads QPGARIKFVD…ANRVLDVVGK (122 aa).

It belongs to the alpha-IPM synthase/homocitrate synthase family. LeuA type 2 subfamily. In terms of assembly, homodimer. Requires Mg(2+) as cofactor.

It is found in the cytoplasm. The enzyme catalyses 3-methyl-2-oxobutanoate + acetyl-CoA + H2O = (2S)-2-isopropylmalate + CoA + H(+). It participates in amino-acid biosynthesis; L-leucine biosynthesis; L-leucine from 3-methyl-2-oxobutanoate: step 1/4. Catalyzes the condensation of the acetyl group of acetyl-CoA with 3-methyl-2-oxobutanoate (2-ketoisovalerate) to form 3-carboxy-3-hydroxy-4-methylpentanoate (2-isopropylmalate). In Rhizobium meliloti (strain 1021) (Ensifer meliloti), this protein is 2-isopropylmalate synthase.